Consider the following 133-residue polypeptide: ATP synthase epsilon chain (133 aa).

It belongs to the ATPase epsilon chain family. In terms of assembly, F-type ATPases have 2 components, CF(1) - the catalytic core - and CF(0) - the membrane proton channel. CF(1) has five subunits: alpha(3), beta(3), gamma(1), delta(1), epsilon(1). CF(0) has three main subunits: a, b and c.

The protein localises to the cell membrane. Produces ATP from ADP in the presence of a proton gradient across the membrane. The chain is ATP synthase epsilon chain from Clostridium botulinum (strain Langeland / NCTC 10281 / Type F).